The primary structure comprises 199 residues: Transgelin-3 (199 aa).

Residues 24-136 (ADLENKLVDW…RTLMALGSVA (113 aa)) form the Calponin-homology (CH) domain. At Ser163 the chain carries Phosphoserine. The Calponin-like repeat unit spans residues 174–199 (IGLQMGSNKGASQAGMTGYGMPRQIM). The span at 176 to 188 (LQMGSNKGASQAG) shows a compositional bias: polar residues. Residues 176–199 (LQMGSNKGASQAGMTGYGMPRQIM) form a disordered region.

It belongs to the calponin family.

This chain is Transgelin-3 (TAGLN3), found in Pongo abelii (Sumatran orangutan).